The chain runs to 247 residues: ATP synthase subunit a (247 aa).

6 consecutive transmembrane segments (helical) span residues 23-43 (ISFT…TLFL), 90-110 (LFMF…VIGF), 116-136 (VIVT…IGFA), 145-165 (MFFP…IELI), 194-214 (GFVV…FAFL), and 215-235 (SAIT…FTIL).

The protein belongs to the ATPase A chain family. As to quaternary structure, F-type ATPases have 2 components, CF(1) - the catalytic core - and CF(0) - the membrane proton channel. CF(1) has five subunits: alpha(3), beta(3), gamma(1), delta(1), epsilon(1). CF(0) has three main subunits: a(1), b(2) and c(9-12). The alpha and beta chains form an alternating ring which encloses part of the gamma chain. CF(1) is attached to CF(0) by a central stalk formed by the gamma and epsilon chains, while a peripheral stalk is formed by the delta and b chains.

The protein resides in the cell inner membrane. Key component of the proton channel; it plays a direct role in the translocation of protons across the membrane. This Paramagnetospirillum magneticum (strain ATCC 700264 / AMB-1) (Magnetospirillum magneticum) protein is ATP synthase subunit a.